A 199-amino-acid chain; its full sequence is MLRALRGAADLLSTALYKNEMMMSRRYLSTPAPEPAKPSSEETTESTEPATSVEDAGEPMKEKRITQPYSSEALTKLKLDQYPLYVEREWWKTGKRMTFWASWRQLRDVKRREQIQEVGADRMRLKAIKFNTILPQAIRDEAAEKMQKARKYDHPRLILNMCQFTGRQRGKIKPYRLSRHLFRRFADRSALSGVQRAMW.

Residues 28–67 (LSTPAPEPAKPSSEETTESTEPATSVEDAGEPMKEKRITQ) form a disordered region.

The protein belongs to the universal ribosomal protein uS14 family. As to quaternary structure, component of the mitochondrial ribosome small subunit (28S) which comprises a 12S rRNA and about 30 distinct proteins. Interacts with LIAT1.

Its subcellular location is the mitochondrion. In Caenorhabditis elegans, this protein is Small ribosomal subunit protein uS14m (mrps-14).